The chain runs to 94 residues: Integration host factor subunit beta (94 aa).

This sequence belongs to the bacterial histone-like protein family. As to quaternary structure, heterodimer of an alpha and a beta chain.

Functionally, this protein is one of the two subunits of integration host factor, a specific DNA-binding protein that functions in genetic recombination as well as in transcriptional and translational control. This is Integration host factor subunit beta from Escherichia fergusonii (strain ATCC 35469 / DSM 13698 / CCUG 18766 / IAM 14443 / JCM 21226 / LMG 7866 / NBRC 102419 / NCTC 12128 / CDC 0568-73).